Consider the following 253-residue polypeptide: 5-oxoprolinase subunit A (253 aa).

This sequence belongs to the LamB/PxpA family. In terms of assembly, forms a complex composed of PxpA, PxpB and PxpC.

It catalyses the reaction 5-oxo-L-proline + ATP + 2 H2O = L-glutamate + ADP + phosphate + H(+). Functionally, catalyzes the cleavage of 5-oxoproline to form L-glutamate coupled to the hydrolysis of ATP to ADP and inorganic phosphate. This chain is 5-oxoprolinase subunit A, found in Azorhizobium caulinodans (strain ATCC 43989 / DSM 5975 / JCM 20966 / LMG 6465 / NBRC 14845 / NCIMB 13405 / ORS 571).